The sequence spans 147 residues: Small ribosomal subunit protein uS12 (147 aa).

This sequence belongs to the universal ribosomal protein uS12 family. As to quaternary structure, part of the 30S ribosomal subunit.

Functionally, with S4 and S5 plays an important role in translational accuracy. Located at the interface of the 30S and 50S subunits. The sequence is that of Small ribosomal subunit protein uS12 from Thermofilum pendens (strain DSM 2475 / Hrk 5).